The sequence spans 370 residues: Sodium-dependent organic anion transporter (370 aa).

Residues 1–24 (MSADCEGNSTCPANSTEEDPPVGM) are disordered. Residues 1–32 (MSADCEGNSTCPANSTEEDPPVGMEGQGSLKL) lie on the Extracellular side of the membrane. 2 N-linked (GlcNAc...) asparagine glycosylation sites follow: asparagine 8 and asparagine 14. Residues 33–53 (VFTVLSAVMVGLVMFSFGCSV) traverse the membrane as a helical segment. Residues 54 to 67 (ESRKLWLHLRRPWG) are Cytoplasmic-facing. Residues 68-88 (IAVGLLCQFGLMPLTAYLLAI) traverse the membrane as a helical segment. The Extracellular segment spans residues 89–97 (GFGLKPFQA). The helical transmembrane segment at 98–118 (IAVLIMGSCPGGTVSNVLTFW) threads the bilayer. Over 119-126 (VDGDMDLS) the chain is Cytoplasmic. The helical transmembrane segment at 127 to 147 (ISMTTCSTVAALGMMPLCLYV) threads the bilayer. Topologically, residues 148 to 159 (YTRSWTLPQSLT) are extracellular. The chain crosses the membrane as a helical span at residues 160–180 (IPYQSIGITLVSLVVPVASGI). At 181–195 (YVNYRWPKQATFILK) the chain is on the cytoplasmic side. A helical transmembrane segment spans residues 196 to 216 (VGAAVGGMLLLVVAVTGVVLA). At 217-224 (KGWNIDVT) the chain is on the extracellular side. Residues 225–245 (LLVISCIFPLVGHVMGFLLAF) form a helical membrane-spanning segment. Over 246 to 265 (LTHQSWQRCRTISIETGAQN) the chain is Cytoplasmic. The helical transmembrane segment at 266 to 283 (IQLCIAMMQLSFSAEYLV) threads the bilayer. Glutamine 284 is a topological domain (extracellular). A helical transmembrane segment spans residues 285 to 305 (LLNFALAYGLFQVLHGLLIVA). Over 306 to 370 (AYQAYKRRQK…ELTSHVPSCE (65 aa)) the chain is Cytoplasmic.

The protein belongs to the bile acid:sodium symporter (BASS) (TC 2.A.28) family. Glycosylated. In terms of tissue distribution, highly expressed in heart, lung, spleen and adrenal gland. Moderately expressed in skeletal muscle, testis and small intestine.

The protein resides in the membrane. It catalyses the reaction estrone 3-sulfate(out) + 2 Na(+)(out) = estrone 3-sulfate(in) + 2 Na(+)(in). It carries out the reaction 17beta-estradiol 3-sulfate(out) + 2 Na(+)(out) = 17beta-estradiol 3-sulfate(in) + 2 Na(+)(in). The enzyme catalyses dehydroepiandrosterone 3-sulfate(out) + 2 Na(+)(out) = dehydroepiandrosterone 3-sulfate(in) + 2 Na(+)(in). The catalysed reaction is androst-5-ene-diol 3-sulfate(out) + 2 Na(+)(out) = androst-5-ene-diol 3-sulfate(in) + 2 Na(+)(in). It catalyses the reaction pregnenolone sulfate(out) + 2 Na(+)(out) = pregnenolone sulfate(in) + 2 Na(+)(in). It carries out the reaction taurolithocholate 3-sulfate(out) + 2 Na(+)(out) = taurolithocholate 3-sulfate(in) + 2 Na(+)(in). The enzyme catalyses androsterone 3alpha-sulfate(out) + 2 Na(+)(out) = androsterone 3alpha-sulfate(in) + 2 Na(+)(in). The catalysed reaction is 5alpha-dihydrotestosterone sulfate(out) + 2 Na(+)(out) = 5alpha-dihydrotestosterone sulfate(in) + 2 Na(+)(in). It catalyses the reaction 17beta-estradiol 17-sulfate(out) + 2 Na(+)(out) = 17beta-estradiol 17-sulfate(in) + 2 Na(+)(in). It carries out the reaction 17alpha-hydroxypregnenolone 3-sulfate(out) + 2 Na(+)(out) = 17alpha-hydroxypregnenolone 3-sulfate(in) + 2 Na(+)(in). The enzyme catalyses epiandrosterone 3-sulfate(out) + 2 Na(+)(out) = epiandrosterone 3-sulfate(in) + 2 Na(+)(in). The catalysed reaction is epitestosterone 17-sulfate(out) + 2 Na(+)(out) = epitestosterone 17-sulfate(in) + 2 Na(+)(in). It catalyses the reaction testosterone 17-sulfate(out) + 2 Na(+)(out) = testosterone 17-sulfate(in) + 2 Na(+)(in). It carries out the reaction 16alpha-hydroxydehydroepiandrosterone 3-sulfate(out) + 2 Na(+)(out) = 16alpha-hydroxydehydroepiandrosterone 3-sulfate(in) + 2 Na(+)(in). Transports sulfoconjugated steroid hormones from the extracellular compartment into the cytosol in a sodium-dependent manner without hydrolysis. Steroid sulfate hormones are commonly considered to be biologically inactive metabolites, that may be activated by steroid sulfatases into free steroids. May play an important role by delivering sulfoconjugated steroids to specific target cells in reproductive organs. May play a role transporting the estriol precursor 16alpha-hydroxydehydroepiandrosterone 3-sulfate (16a-OH-DHEAS) at the fetal blood vessel endothelium. Can also transport other sulfoconjugated molecules such as taurolithocholic acid-3-sulfate and sulfoconjugated pyrenes. The sequence is that of Sodium-dependent organic anion transporter (Slc10a6) from Rattus norvegicus (Rat).